Here is a 401-residue protein sequence, read N- to C-terminus: MTPEEQVKILKRNVVDLISEEELLDRIKRKGKLRVKLGVDPSRPDLHLGHAVVLRKLREFQDLGHTVVLIIGDFTARIGDPSGRNETRPMLTKEEVLENAKTYQEQAFKILDPKRTELRFNGEWLDRMTFADVIILASKYTVARMLERDDFAKRFKEGIPIAISEFLYPLAQAYDSVAIQSDVELGGTDQLFNLLVGRKIQEEYGQEPQIVMTMPIIEGTDGKLKMSKSYGNYIAFNDPPEEMYGKLMSIPDELIIKYMRLLTDIPEERIEEYERKMKEKTINPRDVKMVLAYEITRFFHGEENAKKAQEHFVKVFQKKEIPDEMPVVEISQEKNIVDLLVEIGAASSKSEAKRLVSQGGVYIDGERIEDIKFTVEPDGERVLRVGKRKFYRISGGETKKL.

A 'HIGH' region motif is present at residues 41–50 (PSRPDLHLGH). Residues 225-229 (KMSKS) carry the 'KMSKS' region motif. Position 228 (Lys228) interacts with ATP. In terms of domain architecture, S4 RNA-binding spans 334–395 (KNIVDLLVEI…GKRKFYRISG (62 aa)).

It belongs to the class-I aminoacyl-tRNA synthetase family. TyrS type 2 subfamily. In terms of assembly, homodimer.

Its subcellular location is the cytoplasm. It catalyses the reaction tRNA(Tyr) + L-tyrosine + ATP = L-tyrosyl-tRNA(Tyr) + AMP + diphosphate + H(+). Its function is as follows. Catalyzes the attachment of tyrosine to tRNA(Tyr) in a two-step reaction: tyrosine is first activated by ATP to form Tyr-AMP and then transferred to the acceptor end of tRNA(Tyr). This chain is Tyrosine--tRNA ligase, found in Thermotoga maritima (strain ATCC 43589 / DSM 3109 / JCM 10099 / NBRC 100826 / MSB8).